A 353-amino-acid polypeptide reads, in one-letter code: MKVALTGGGTGGHLSIAKALAIELEKQGVEAIYLGSTYGQDKEWFEDSPLFSECYFFNTQGVVNKSFFKKIGSLFLQAKAALKAKEILKKHQITHTISVGGFSAGPASFASLLNKIPLYIHEQNAIKGSLNRYLSPKAKAVFSSYAFKDKGNHIVTSYPVQNVFFDHARTRTEIKHILFIGGSQGAKAINEFALFNAPKLTKQGIEITHICGPNSYERVRFFYQELGLLDKIVLFAFHNNIIEVMQKADLCVSRAGASSVWELCANGLPTIFIPYPFASNNHQYHNVLEFEKENLCYVVPQNELLPKKLFEVIRKLNQKDEQGHKNLTIISNKLQQKIAKDGAKTIIERILSA.

UDP-N-acetyl-alpha-D-glucosamine is bound by residues 10-12, Asn-124, Ser-183, and Gln-283; that span reads TGG.

The protein belongs to the glycosyltransferase 28 family. MurG subfamily.

Its subcellular location is the cell inner membrane. It carries out the reaction di-trans,octa-cis-undecaprenyl diphospho-N-acetyl-alpha-D-muramoyl-L-alanyl-D-glutamyl-meso-2,6-diaminopimeloyl-D-alanyl-D-alanine + UDP-N-acetyl-alpha-D-glucosamine = di-trans,octa-cis-undecaprenyl diphospho-[N-acetyl-alpha-D-glucosaminyl-(1-&gt;4)]-N-acetyl-alpha-D-muramoyl-L-alanyl-D-glutamyl-meso-2,6-diaminopimeloyl-D-alanyl-D-alanine + UDP + H(+). Its pathway is cell wall biogenesis; peptidoglycan biosynthesis. In terms of biological role, cell wall formation. Catalyzes the transfer of a GlcNAc subunit on undecaprenyl-pyrophosphoryl-MurNAc-pentapeptide (lipid intermediate I) to form undecaprenyl-pyrophosphoryl-MurNAc-(pentapeptide)GlcNAc (lipid intermediate II). The chain is UDP-N-acetylglucosamine--N-acetylmuramyl-(pentapeptide) pyrophosphoryl-undecaprenol N-acetylglucosamine transferase from Helicobacter acinonychis (strain Sheeba).